The primary structure comprises 432 residues: 3-phosphoshikimate 1-carboxyvinyltransferase (432 aa).

3-phosphoshikimate-binding residues include Lys-23, Ser-24, and Arg-28. Lys-23 lines the phosphoenolpyruvate pocket. Residues Gly-95 and Arg-123 each coordinate phosphoenolpyruvate. 4 residues coordinate 3-phosphoshikimate: Ser-167, Gln-169, Asp-317, and Lys-344. Residue Gln-169 participates in phosphoenolpyruvate binding. Asp-317 serves as the catalytic Proton acceptor. Arg-348 and Arg-390 together coordinate phosphoenolpyruvate.

Belongs to the EPSP synthase family. In terms of assembly, monomer.

The protein resides in the cytoplasm. It carries out the reaction 3-phosphoshikimate + phosphoenolpyruvate = 5-O-(1-carboxyvinyl)-3-phosphoshikimate + phosphate. The protein operates within metabolic intermediate biosynthesis; chorismate biosynthesis; chorismate from D-erythrose 4-phosphate and phosphoenolpyruvate: step 6/7. In terms of biological role, catalyzes the transfer of the enolpyruvyl moiety of phosphoenolpyruvate (PEP) to the 5-hydroxyl of shikimate-3-phosphate (S3P) to produce enolpyruvyl shikimate-3-phosphate and inorganic phosphate. This Staphylococcus aureus (strain N315) protein is 3-phosphoshikimate 1-carboxyvinyltransferase.